Here is a 348-residue protein sequence, read N- to C-terminus: 4-hydroxyphenylpyruvate dioxygenase (348 aa).

VOC domains lie at 11–141 (GFAF…ITSP) and 151–303 (AIDH…IFTE). Positions 154, 232, and 312 each coordinate Fe cation.

It belongs to the 4HPPD family. It depends on Fe cation as a cofactor.

The catalysed reaction is 3-(4-hydroxyphenyl)pyruvate + O2 = homogentisate + CO2. Its function is as follows. Catalyzes the transformation of p-hydroxyphenylpyruvate into HGA. Has hemolytic and brown pigment production activity. The sequence is that of 4-hydroxyphenylpyruvate dioxygenase (lly) from Legionella pneumophila subsp. pneumophila (strain Philadelphia 1 / ATCC 33152 / DSM 7513).